Consider the following 506-residue polypeptide: Cysteine--tRNA ligase (506 aa).

Cysteine 34 is a Zn(2+) binding site. Residues 36–46 carry the 'HIGH' region motif; that stretch reads PTVYDFAHIGN. Zn(2+) is bound by residues cysteine 230, histidine 269, and glutamate 273. The 'KMSKS' region motif lies at 302-306; it reads KMSKS. Position 305 (lysine 305) interacts with ATP.

Belongs to the class-I aminoacyl-tRNA synthetase family. Monomer. Requires Zn(2+) as cofactor.

It localises to the cytoplasm. It carries out the reaction tRNA(Cys) + L-cysteine + ATP = L-cysteinyl-tRNA(Cys) + AMP + diphosphate. The protein is Cysteine--tRNA ligase of Brucella melitensis biotype 2 (strain ATCC 23457).